The following is a 776-amino-acid chain: Disintegrin and metalloproteinase domain-containing protein 7 (776 aa).

The N-terminal stretch at 1–23 (MLPGCIFLMILLILQVKEKVILG) is a signal peptide. Positions 24 to 176 (VEGQQLVYPK…NYSCTELNFT (153 aa)) are excised as a propeptide. Residues 26-669 (GQQLVYPKKL…WEETLNVTNV (644 aa)) are Extracellular-facing. Residues Asn-84, Asn-167, and Asn-174 are each glycosylated (N-linked (GlcNAc...) asparagine). The Peptidase M12B domain maps to 199–394 (KYIELFIVAD…YKPTCMLNIP (196 aa)). 4 disulfides stabilise this stretch: Cys-310/Cys-389, Cys-350/Cys-373, Cys-352/Cys-357, and Cys-460/Cys-480. The Disintegrin domain occupies 402–488 (FQFCGNKKLD…ACPKDQFRVN (87 aa)). N-linked (GlcNAc...) asparagine glycans are attached at residues Asn-584, Asn-629, and Asn-665. A helical membrane pass occupies residues 670–690 (AILIVVLVLVIVGIGVLILLI). At 691–776 (RYQKCIKLKQ…GIADPNQSAK (86 aa)) the chain is on the cytoplasmic side. The disordered stretch occupies residues 757–776 (TLKPASKDSRGIADPNQSAK).

In terms of assembly, interacts with ITM2B in sperm; the interaction increases following capacitation. Interacts with HSPA5 and CANX.

The protein resides in the membrane. Required for normal male fertility via maintenance of epithelial cell morphology in the caput epididymis and subsequently correct epididymis lumen structure required for sperm development. Plays a role in sperm motility, flagella morphology and tyrosine phosphorylation during sperm capacitance. Plays a role in normal expression levels of HSPA5, ITM2B and ADAM2 in sperm both prior to and post-capacitation. This is a non catalytic metalloprotease-like protein. In Macaca fascicularis (Crab-eating macaque), this protein is Disintegrin and metalloproteinase domain-containing protein 7 (ADAM7).